The sequence spans 334 residues: tRNA-cytidine(32) 2-sulfurtransferase (334 aa).

Residues 74-79 carry the PP-loop motif motif; that stretch reads SGGKDS. The [4Fe-4S] cluster site is built by C149, C152, and C240.

Belongs to the TtcA family. In terms of assembly, homodimer. Requires Mg(2+) as cofactor. [4Fe-4S] cluster is required as a cofactor.

The protein localises to the cytoplasm. The enzyme catalyses cytidine(32) in tRNA + S-sulfanyl-L-cysteinyl-[cysteine desulfurase] + AH2 + ATP = 2-thiocytidine(32) in tRNA + L-cysteinyl-[cysteine desulfurase] + A + AMP + diphosphate + H(+). Its pathway is tRNA modification. Its function is as follows. Catalyzes the ATP-dependent 2-thiolation of cytidine in position 32 of tRNA, to form 2-thiocytidine (s(2)C32). The sulfur atoms are provided by the cysteine/cysteine desulfurase (IscS) system. The polypeptide is tRNA-cytidine(32) 2-sulfurtransferase (Burkholderia ambifaria (strain ATCC BAA-244 / DSM 16087 / CCUG 44356 / LMG 19182 / AMMD) (Burkholderia cepacia (strain AMMD))).